The following is a 501-amino-acid chain: Cobyric acid synthase (501 aa).

Residues 251–446 (NIDIAIIRLS…LHGIFDSEEF (196 aa)) enclose the GATase cobBQ-type domain. Cys-332 functions as the Nucleophile in the catalytic mechanism. His-438 is an active-site residue.

Belongs to the CobB/CobQ family. CobQ subfamily.

It participates in cofactor biosynthesis; adenosylcobalamin biosynthesis. Functionally, catalyzes amidations at positions B, D, E, and G on adenosylcobyrinic A,C-diamide. NH(2) groups are provided by glutamine, and one molecule of ATP is hydrogenolyzed for each amidation. This is Cobyric acid synthase from Clostridium botulinum (strain Alaska E43 / Type E3).